A 1643-amino-acid polypeptide reads, in one-letter code: Neurexin-3 (1643 aa).

Positions 1-27 (MSSTLHSVFFTLKVSILLGSLLGLCLG) are cleaved as a signal peptide. Residues 28–202 (LEFMGLPNQW…GVQMDAEGPC (175 aa)) enclose the Laminin G-like 1 domain. Residues 28–1568 (LEFMGLPNQW…EVIRESSSTT (1541 aa)) are Extracellular-facing. N-linked (GlcNAc...) asparagine glycosylation is found at asparagine 58 and asparagine 105. Positions 198–235 (AEGPCGERPCENGGICFLLDGHPTCDCSTTGYGGKLCS) constitute an EGF-like 1 domain. 3 cysteine pairs are disulfide-bonded: cysteine 202–cysteine 213, cysteine 207–cysteine 222, and cysteine 224–cysteine 234. 2 consecutive Laminin G-like domains span residues 258–440 (VATF…VFKC) and 447–639 (DPIN…KSSC). Residues aspartate 304, leucine 321, and methionine 374 each coordinate Ca(2+). Cystine bridges form between cysteine 404–cysteine 440, cysteine 610–cysteine 639, cysteine 647–cysteine 658, cysteine 652–cysteine 667, and cysteine 669–cysteine 679. In terms of domain architecture, EGF-like 2 spans 643–680 (SAKQCDSYPCKNNAVCKDGWNRFICDCTGTGYWGRTCE). 2 consecutive Laminin G-like domains span residues 685 to 857 (ILSY…IDYC) and 871 to 1046 (DPVT…ERGC). The Ca(2+) site is built by aspartate 732 and leucine 749. Asparagine 757 is a glycosylation site (N-linked (GlcNAc...) asparagine). Residue arginine 807 coordinates Ca(2+). Intrachain disulfides connect cysteine 1018/cysteine 1046, cysteine 1053/cysteine 1064, cysteine 1058/cysteine 1073, and cysteine 1075/cysteine 1085. The 38-residue stretch at 1049 to 1086 (PSTTCQEDSCANQGVCMQQWEGFTCDCSMTSYSGNQCN) folds into the EGF-like 3 domain. The 171-residue stretch at 1090–1260 (ATYIFGKSGG…NPNIKINGSV (171 aa)) folds into the Laminin G-like 6 domain. Ca(2+) is bound by residues aspartate 1142 and isoleucine 1159. Asparagine 1189 is a glycosylation site (N-linked (GlcNAc...) asparagine). Positions 1211 and 1213 each coordinate Ca(2+). Asparagine 1257 and asparagine 1301 each carry an N-linked (GlcNAc...) asparagine glycan. The segment at 1294-1318 (ATTTTRKNRSTASIQPTSDDLVSSA) is disordered. Residues 1303-1318 (STASIQPTSDDLVSSA) show a composition bias toward polar residues. An O-linked (Xyl...) (heparan sulfate) serine glycan is attached at serine 1317. The helical transmembrane segment at 1569 to 1589 (GMVVGIVAAAALCILILLYAM) threads the bilayer. Residues 1590-1643 (YKYRNRDEGSYQVDETRNYISNSAQSNGTLMKEKQQSSKSGHKKQKNKDREYYV) lie on the Cytoplasmic side of the membrane. The interval 1611 to 1643 (NSAQSNGTLMKEKQQSSKSGHKKQKNKDREYYV) is disordered.

This sequence belongs to the neurexin family. In terms of assembly, the laminin G-like domain 2 binds to NXPH1. Specific isoforms bind to alpha-dystroglycan. The cytoplasmic C-terminal region binds to CASK. Specific isoforms bind neuroligins NLGN1, NLGN2 and NLGN3. Interacts with CLSTN3. O-glycosylated; contains heparan sulfate. Heparan sulfate attachment is required for synapse development by mediating interactions with neuroligins. In terms of tissue distribution, expressed in the blood vessel walls (at protein level). Highly expressed in brain, lung, and pancreas; a lower level of expression is detectable in heart, placenta, liver, and kidney, whereas no expression can be observed in skeletal muscle. Isoform 4a is heart-specific.

The protein resides in the presynaptic cell membrane. Neuronal cell surface protein that may be involved in cell recognition and cell adhesion. May mediate intracellular signaling. This chain is Neurexin-3 (NRXN3), found in Homo sapiens (Human).